Reading from the N-terminus, the 568-residue chain is Protein NDNF (568 aa).

The signal sequence occupies residues 1-19 (MELFYWCLLCLLLPLTSRT). Fibronectin type-III domains lie at 261-331 (NLGK…VGAF) and 445-564 (PSLP…IVKT). N-linked (GlcNAc...) asparagine glycosylation is found at N322 and N488.

In terms of assembly, binds heparin and chondroitin sulfate. Post-translationally, O-glycosylated; contains heparan sulfate and chondroitin sulfate. In terms of processing, N-glycosylated. As to expression, expressed in brain and spinal cord with no expression detected in heart, kidney or liver. Expressed by neurons but not by astrocytes. In the brain, detected in the cerebrum, cerebellum and olfactory bulbs. In the cerebral cortex, highly expressed in Cajal-Retzius cells. Also expressed in hippocampal neurons and in Purkinje and granule cells of the cerebellum (at protein level). Expressed in neurons along the GnRH migratory route.

The protein resides in the secreted. Functionally, secretory protein that plays a role in various cellular processes. Acts as a chemorepellent acting on gonadotropin-releasing hormone (GnRH) expressing neurons regulating their migration to the hypothalamus. Also promotes neuron migration, growth and survival as well as neurite outgrowth and is involved in the development of the olfactory system. May also act through the regulation of growth factors activity and downstream signaling. Also regulates extracellular matrix assembly and cell adhesiveness. Promotes endothelial cell survival, vessel formation and plays an important role in the process of revascularization through NOS3-dependent mechanisms. The chain is Protein NDNF (Ndnf) from Mus musculus (Mouse).